The chain runs to 1843 residues: Cilia- and flagella-associated protein 44 (1843 aa).

The segment at 1–86 (MKEPDDQDTS…PPVEVKEEPE (86 aa)) is disordered. Polar residues predominate over residues 29 to 39 (LKSSQDTTADS). A compositionally biased stretch (acidic residues) spans 41-58 (TDGEESYLGDDLDLDDMD). WD repeat units follow at residues 214–255 (GAEK…PILR), 258–297 (AFSQ…TGLK), 308–346 (TSTS…VELC), 353–390 (CHSG…TADV), 456–495 (FHSG…PLVH), 497–541 (KFKQ…GLTV), and 561–600 (PHTD…KPIG). Residues 701 to 726 (REAFGEEEIPEEETSEEGEEEEPPLP) are disordered. A compositionally biased stretch (acidic residues) spans 705–724 (GEEEIPEEETSEEGEEEEPP). WD repeat units follow at residues 790–829 (TEDN…PFLV) and 842–881 (NNYG…IVPK). 3 disordered regions span residues 1040–1086 (YSKL…SVLE), 1266–1291 (QRKQ…SAGG), and 1488–1524 (KEVE…DDVF). The segment covering 1047–1071 (SQSERRQSKMERLEKEGPGKKESQR) has biased composition (basic and acidic residues). The residue at position 1069 (Ser1069) is a Phosphoserine. Over residues 1072-1081 (DTGGSISLQE) the composition is skewed to polar residues. A compositionally biased stretch (acidic residues) spans 1492–1524 (GDADEDEESEESSEEESSLESDEDASGSEDDVF). Coiled coils occupy residues 1548 to 1603 (RLDI…RLNE) and 1631 to 1665 (LVFS…CRER). A WD 10 repeat occupies 1699–1744 (IDLEALQTLSVNTTLEELKIKKLRKELSNAKELRMWEEKIAQVRWD).

It belongs to the CFAP44 family. Expressed in testis.

Its subcellular location is the cell projection. It localises to the cilium. The protein resides in the flagellum. It is found in the cytoplasm. The protein localises to the cytoskeleton. Its subcellular location is the flagellum axoneme. In terms of biological role, flagellar protein involved in sperm flagellum axoneme organization and function. The protein is Cilia- and flagella-associated protein 44 of Mus musculus (Mouse).